The primary structure comprises 469 residues: MASPRELTQNPLKKIWMPYSNGRPALHACQRGVCMTNCPTLIVMVGLPARGKTYISKKLTRYLNWIGVPTREFNVGQYRRNMVKTYKSFEFFLPDNEEGLKIRKQCALAALRDVRRFLSEEGGHVAVFDATNTTRERRATIFNFGEQNGYKTFFVESICVDPEVIAANIVQVKLGSPDYVNRDSDEATEDFMRRIECYENSYESLDEDLDRDLSYIKIMDVGQSYVVNRVADHIQSRIVYYLMNIHVTPRSIYLCRHGESELNLKGRIGGDPGLSPRGREFAKSLAQFISDQNIKDLKVWTSQMKRTIQTAEALGVPYEQWKVLNEIDAGVCEEMTYEEIQDNYPLEFALRDQDKYRYRYPKGESYEDLVQRLEPVIMELERQENVLVICHQAVMRCLLAYFLDKAAEQLPYLKCPLHTVLKLTPVAYGCKVESIFLNVAAVNTHRDRPQNVDISRPPEEALVTVPAHQ.

A 6-phosphofructo-2-kinase region spans residues 1 to 249; that stretch reads MASPRELTQN…YYLMNIHVTP (249 aa). ATP is bound at residue 46-54; the sequence is GLPARGKTY. 2 residues coordinate beta-D-fructose 6-phosphate: Arg79 and Arg103. Asp129 is a catalytic residue. 2 residues coordinate beta-D-fructose 6-phosphate: Thr131 and Arg137. Residue Cys159 is part of the active site. 168–173 is an ATP binding site; it reads NIVQVK. Beta-D-fructose 6-phosphate contacts are provided by Lys173, Arg194, and Tyr198. A fructose-2,6-bisphosphatase region spans residues 250–469; sequence RSIYLCRHGE…EALVTVPAHQ (220 aa). Arg256 provides a ligand contact to beta-D-fructose 2,6-bisphosphate. The active-site Tele-phosphohistidine intermediate is the His257. Beta-D-fructose 2,6-bisphosphate contacts are provided by Asn263, Gly269, and Arg306. Glu326 acts as the Proton donor/acceptor in catalysis. Beta-D-fructose 2,6-bisphosphate is bound by residues Tyr337, Arg351, Lys355, Tyr366, Gln392, and Arg396. 348–351 serves as a coordination point for ATP; it reads FALR. ATP is bound by residues 392-396 and Tyr428; that span reads QAVMR. Thr444 is modified (phosphothreonine; by PKC).

In the C-terminal section; belongs to the phosphoglycerate mutase family. Homodimer.

The catalysed reaction is beta-D-fructose 2,6-bisphosphate + H2O = beta-D-fructose 6-phosphate + phosphate. The enzyme catalyses beta-D-fructose 6-phosphate + ATP = beta-D-fructose 2,6-bisphosphate + ADP + H(+). The most important regulatory mechanism of these opposing activities is by phosphorylation and dephosphorylation of the enzyme. Its function is as follows. Synthesis and degradation of fructose 2,6-bisphosphate. In Macaca fascicularis (Crab-eating macaque), this protein is 6-phosphofructo-2-kinase/fructose-2,6-bisphosphatase 4 (PFKFB4).